The primary structure comprises 177 residues: Small ribosomal subunit protein uS13 (177 aa).

The span at 132-145 shows a compositional bias: basic residues; that stretch reads GVRHKRGQKVRGQR. Positions 132–177 are disordered; it reads GVRHKRGQKVRGQRTKSTGRTEGTIGVNVEAIKEEQAEDAAAEDDE. Residues 167–177 are compositionally biased toward acidic residues; the sequence is QAEDAAAEDDE.

It belongs to the universal ribosomal protein uS13 family. As to quaternary structure, part of the 30S ribosomal subunit. Forms a loose heterodimer with protein S19. Forms two bridges to the 50S subunit in the 70S ribosome.

In terms of biological role, located at the top of the head of the 30S subunit, it contacts several helices of the 16S rRNA. In the 70S ribosome it contacts the 23S rRNA (bridge B1a) and protein L5 of the 50S subunit (bridge B1b), connecting the 2 subunits; these bridges are implicated in subunit movement. This is Small ribosomal subunit protein uS13 from Haloarcula marismortui (strain ATCC 43049 / DSM 3752 / JCM 8966 / VKM B-1809) (Halobacterium marismortui).